We begin with the raw amino-acid sequence, 252 residues long: 3-dehydroquinate dehydratase (252 aa).

Residues S21, 46–48 (EWR), and R82 each bind 3-dehydroquinate. Residue H143 is the Proton donor/acceptor of the active site. Catalysis depends on K170, which acts as the Schiff-base intermediate with substrate. R213, S232, and Q236 together coordinate 3-dehydroquinate.

It belongs to the type-I 3-dehydroquinase family. Homodimer.

It catalyses the reaction 3-dehydroquinate = 3-dehydroshikimate + H2O. It functions in the pathway metabolic intermediate biosynthesis; chorismate biosynthesis; chorismate from D-erythrose 4-phosphate and phosphoenolpyruvate: step 3/7. Inhibited by (2R)-2-methyl-3-dehydroquinic acid. Its function is as follows. Involved in the third step of the chorismate pathway, which leads to the biosynthesis of aromatic amino acids. Catalyzes the cis-dehydration of 3-dehydroquinate (DHQ) and introduces the first double bond of the aromatic ring to yield 3-dehydroshikimate. The reaction involves the formation of an imine intermediate between the keto group of 3-dehydroquinate and the epsilon-amino group of a Lys-170 at the active site. This is 3-dehydroquinate dehydratase from Salmonella typhimurium (strain LT2 / SGSC1412 / ATCC 700720).